Here is a 75-residue protein sequence, read N- to C-terminus: U6-lycotoxin-Ls1b (75 aa).

Residues 1–21 (MKLLLFTALVLVVISLIEVEA) form the signal peptide. Residues 22-25 (ENER) constitute a propeptide that is removed on maturation.

This sequence belongs to the neurotoxin 19 (CSTX) family. 06 (U6-Lctx) subfamily. In terms of processing, contains 4 disulfide bonds. In terms of tissue distribution, expressed by the venom gland.

The protein localises to the secreted. The polypeptide is U6-lycotoxin-Ls1b (Lycosa singoriensis (Wolf spider)).